A 577-amino-acid chain; its full sequence is Proline--tRNA ligase (577 aa).

Belongs to the class-II aminoacyl-tRNA synthetase family. ProS type 1 subfamily. In terms of assembly, homodimer.

Its subcellular location is the cytoplasm. It carries out the reaction tRNA(Pro) + L-proline + ATP = L-prolyl-tRNA(Pro) + AMP + diphosphate. Functionally, catalyzes the attachment of proline to tRNA(Pro) in a two-step reaction: proline is first activated by ATP to form Pro-AMP and then transferred to the acceptor end of tRNA(Pro). As ProRS can inadvertently accommodate and process non-cognate amino acids such as alanine and cysteine, to avoid such errors it has two additional distinct editing activities against alanine. One activity is designated as 'pretransfer' editing and involves the tRNA(Pro)-independent hydrolysis of activated Ala-AMP. The other activity is designated 'posttransfer' editing and involves deacylation of mischarged Ala-tRNA(Pro). The misacylated Cys-tRNA(Pro) is not edited by ProRS. This is Proline--tRNA ligase from Thermotoga neapolitana (strain ATCC 49049 / DSM 4359 / NBRC 107923 / NS-E).